The primary structure comprises 409 residues: MASGKATGKTDAPAPVIKLGGPKPPKVGSSGNASWFQAIKANKLNIPPPKFEGSGVPDNENLKSSQQHGYWRRQATFKPGKGGRKPVPDAWYFYYTGTGPAANLNWGDSQDGIVWVAGKGADTKFRSNQGTRDSDKFDQYPLRFSDGGPDGNFRWDFIPLNGGRSGRSTAASSAASSRAPSREVSRGRRSGSEDDLIARAARIIQDQQKKGSRITKAKADEMAHRRYCKRTIPPNYKVDQVFGPRTKGKEGNFGDDKMNEEGIKDGRVTAMLNLVPSSHACLFGSRVTPKLQPDGLHLKFEFTTVVPRDDPQFDNYVKICDQCVDGVGTRPKDDEPRPKSRSSSRPATRGNSPAPRQQRPKKEKKPKKHDDEVDKALTSDEERNNAQLEFYDEPKVINWGDAALGENEL.

4 disordered regions span residues 1-32, 46-68, 164-196, and 238-258; these read MASG…SSGN, IPPP…SQQH, RSGR…EDDL, and VDQV…DDKM. Residues 15 to 31 are compositionally biased toward low complexity; that stretch reads PVIKLGGPKPPKVGSSG. Residues 29 to 160 are RNA-binding; that stretch reads SSGNASWFQA…GNFRWDFIPL (132 aa). In terms of domain architecture, CoV N NTD spans 31–156; it reads GNASWFQAIK…GGPDGNFRWD (126 aa). Residues 166 to 179 are compositionally biased toward low complexity; sequence GRSTAASSAASSRA. 2 stretches are compositionally biased toward basic and acidic residues: residues 180–192 and 247–258; these read PSRE…RSGS and KGKEGNFGDDKM. 2 positions are modified to phosphoserine; by host: S190 and S192. Residues 215 to 331 enclose the CoV N CTD domain; it reads TKAKADEMAH…QCVDGVGTRP (117 aa). The dimerization stretch occupies residues 226–333; sequence RYCKRTIPPN…VDGVGTRPKD (108 aa). C320 and C323 are oxidised to a cystine. The interval 326–409 is disordered; it reads GVGTRPKDDE…GDAALGENEL (84 aa). The segment covering 358–367 has biased composition (basic residues); that stretch reads QRPKKEKKPK. Basic and acidic residues predominate over residues 368 to 384; it reads KHDDEVDKALTSDEERN. T378 is subject to Phosphothreonine; by host. S379 is modified (phosphoserine; by host).

The protein belongs to the gammacoronavirus nucleocapsid protein family. As to quaternary structure, homooligomer. Both monomeric and oligomeric forms interact with RNA. Interacts with protein M. Interacts with NSP3; this interaction serves to tether the genome to the newly translated replicase-transcriptase complex at a very early stage of infection. In terms of processing, ADP-ribosylated. The ADP-ribosylation is retained in the virion during infection. Phosphorylated on serine and threonine residues.

The protein localises to the virion. The protein resides in the host endoplasmic reticulum-Golgi intermediate compartment. It localises to the host Golgi apparatus. Packages the positive strand viral genome RNA into a helical ribonucleocapsid (RNP) and plays a fundamental role during virion assembly through its interactions with the viral genome and membrane protein M. Plays an important role in enhancing the efficiency of subgenomic viral RNA transcription as well as viral replication. The sequence is that of Nucleoprotein from Avian infectious bronchitis virus (strain M41) (IBV).